Reading from the N-terminus, the 785-residue chain is Semaphorin-3F (785 aa).

Positions 1 to 18 are cleaved as a signal peptide; it reads MLVTAFILWASLLTGAWP. In terms of domain architecture, Sema spans 31–545; that stretch reads RVRLSFKELK…SAVGVTHLSL (515 aa). The N-linked (GlcNAc...) asparagine glycan is linked to Asn53. A disulfide bridge links Cys104 with Cys115. An N-linked (GlcNAc...) asparagine glycan is attached at Asn126. 4 disulfide bridges follow: Cys133/Cys142, Cys300/Cys412, Cys324/Cys372, and Cys548/Cys566. The tract at residues 583 to 602 is disordered; it reads RSRRQDVRHGNPIRQCRGFN. The 91-residue stretch at 605 to 695 folds into the Ig-like C2-type domain; that stretch reads ANKNAVESVQ…KHIVTRVQLH (91 aa). An intrachain disulfide couples Cys678 to Cys746. A disordered region spans residues 753 to 785; sequence VPPRPREAPGALRPPELQDQKKPRNRRHHPPDT. Basic residues predominate over residues 775-785; sequence PRNRRHHPPDT.

This sequence belongs to the semaphorin family. As to expression, expressed ubiquitously in adulthood. During embryogenesis, expressed in subregions of the central nervous system and various other tissues like skin, kidney, lung and intestine.

The protein localises to the secreted. The chain is Semaphorin-3F (Sema3f) from Mus musculus (Mouse).